The chain runs to 124 residues: Protein RibT (124 aa).

Residues 3 to 124 (IRYKKSFEKI…QQDQDISYNN (122 aa)) enclose the N-acetyltransferase domain.

In terms of biological role, involved in riboflavin biosynthesis. The protein is Protein RibT (ribT) of Bacillus subtilis (strain 168).